The sequence spans 347 residues: Protein-glutamate methylesterase/protein-glutamine glutaminase 2 (347 aa).

One can recognise a Response regulatory domain in the interval 2 to 119 (RVMIVDDSAV…LGGADLYRKD (118 aa)). Aspartate 52 carries the post-translational modification 4-aspartylphosphate. Residues 131-153 (AARPAPPQAAPRPTLAPPSSDPA) are disordered. A compositionally biased stretch (pro residues) spans 134 to 150 (PAPPQAAPRPTLAPPSS). In terms of domain architecture, CheB-type methylesterase spans 152–346 (PAGPIEAVVV…PYIASRARSV (195 aa)). Residues serine 164, histidine 191, and aspartate 288 contribute to the active site.

Belongs to the CheB family. Phosphorylated by CheA. Phosphorylation of the N-terminal regulatory domain activates the methylesterase activity.

It localises to the cytoplasm. It carries out the reaction [protein]-L-glutamate 5-O-methyl ester + H2O = L-glutamyl-[protein] + methanol + H(+). It catalyses the reaction L-glutaminyl-[protein] + H2O = L-glutamyl-[protein] + NH4(+). Functionally, involved in chemotaxis. Part of a chemotaxis signal transduction system that modulates chemotaxis in response to various stimuli. Catalyzes the demethylation of specific methylglutamate residues introduced into the chemoreceptors (methyl-accepting chemotaxis proteins or MCP) by CheR. Also mediates the irreversible deamidation of specific glutamine residues to glutamic acid. The sequence is that of Protein-glutamate methylesterase/protein-glutamine glutaminase 2 from Caulobacter vibrioides (strain ATCC 19089 / CIP 103742 / CB 15) (Caulobacter crescentus).